Reading from the N-terminus, the 472-residue chain is Divalent metal cation transporter MntH (472 aa).

Helical transmembrane passes span 59 to 79 (LLAFLGPGYMVSVGYMDPGNW), 92 to 112 (MLLSVILLSNVMAIVLQALAA), 144 to 164 (LAIIACDLAEVIGTAIALNLL), 167 to 187 (VPIILGAVITAVDVVLVLLLM), 196 to 216 (AFVIALLLVIFGCFVVQIVLA), 233 to 253 (VVADPQALYLAIGIVGATVMP), 288 to 308 (LALMLALFINASILILAAAVF), 325 to 345 (LLAPVLGVGVAATLFATALLA), 377 to 397 (VLTRGLAIVPVIVVVALYGEQ), 402 to 422 (LLLLSQVILSMQLPFAVIPLL), and 439 to 459 (WLMVVAWLIAGVIVVLNVKLL).

This sequence belongs to the NRAMP family.

It is found in the cell inner membrane. H(+)-stimulated, divalent metal cation uptake system. In Xylella fastidiosa (strain Temecula1 / ATCC 700964), this protein is Divalent metal cation transporter MntH.